The primary structure comprises 248 residues: 3-deoxy-manno-octulosonate cytidylyltransferase (248 aa).

The protein belongs to the KdsB family.

The protein localises to the cytoplasm. The enzyme catalyses 3-deoxy-alpha-D-manno-oct-2-ulosonate + CTP = CMP-3-deoxy-beta-D-manno-octulosonate + diphosphate. The protein operates within nucleotide-sugar biosynthesis; CMP-3-deoxy-D-manno-octulosonate biosynthesis; CMP-3-deoxy-D-manno-octulosonate from 3-deoxy-D-manno-octulosonate and CTP: step 1/1. It participates in bacterial outer membrane biogenesis; lipopolysaccharide biosynthesis. Activates KDO (a required 8-carbon sugar) for incorporation into bacterial lipopolysaccharide in Gram-negative bacteria. This is 3-deoxy-manno-octulosonate cytidylyltransferase from Leptospira interrogans serogroup Icterohaemorrhagiae serovar copenhageni (strain Fiocruz L1-130).